A 299-amino-acid chain; its full sequence is ATP phosphoribosyltransferase (299 aa).

Belongs to the ATP phosphoribosyltransferase family. Long subfamily. Equilibrium between an active dimeric form, an inactive hexameric form and higher aggregates. Interconversion between the various forms is largely reversible and is influenced by the natural substrates and inhibitors of the enzyme. Requires Mg(2+) as cofactor.

It localises to the cytoplasm. It carries out the reaction 1-(5-phospho-beta-D-ribosyl)-ATP + diphosphate = 5-phospho-alpha-D-ribose 1-diphosphate + ATP. Its pathway is amino-acid biosynthesis; L-histidine biosynthesis; L-histidine from 5-phospho-alpha-D-ribose 1-diphosphate: step 1/9. Feedback inhibited by histidine. Functionally, catalyzes the condensation of ATP and 5-phosphoribose 1-diphosphate to form N'-(5'-phosphoribosyl)-ATP (PR-ATP). Has a crucial role in the pathway because the rate of histidine biosynthesis seems to be controlled primarily by regulation of HisG enzymatic activity. The polypeptide is ATP phosphoribosyltransferase (Salmonella choleraesuis (strain SC-B67)).